Here is a 197-residue protein sequence, read N- to C-terminus: NADH-quinone oxidoreductase subunit I 2 (197 aa).

2 4Fe-4S ferredoxin-type domains span residues 42 to 71 (GVIG…IDSH) and 91 to 120 (DRFA…WSPE). C51, C54, C57, C61, C100, C103, C106, and C110 together coordinate [4Fe-4S] cluster. Residues 147–197 (APPALDPGAEEPKELAAARKAADKLAAQQQPDQPGPDHPGQPDESGQEGRT) form a disordered region. Over residues 156–169 (EEPKELAAARKAAD) the composition is skewed to basic and acidic residues.

It belongs to the complex I 23 kDa subunit family. As to quaternary structure, NDH-1 is composed of 14 different subunits. Subunits NuoA, H, J, K, L, M, N constitute the membrane sector of the complex. Requires [4Fe-4S] cluster as cofactor.

Its subcellular location is the cell membrane. It carries out the reaction a quinone + NADH + 5 H(+)(in) = a quinol + NAD(+) + 4 H(+)(out). NDH-1 shuttles electrons from NADH, via FMN and iron-sulfur (Fe-S) centers, to quinones in the respiratory chain. The immediate electron acceptor for the enzyme in this species is believed to be ubiquinone. Couples the redox reaction to proton translocation (for every two electrons transferred, four hydrogen ions are translocated across the cytoplasmic membrane), and thus conserves the redox energy in a proton gradient. This Streptomyces coelicolor (strain ATCC BAA-471 / A3(2) / M145) protein is NADH-quinone oxidoreductase subunit I 2.